Reading from the N-terminus, the 198-residue chain is Type II secretion system protein J (198 aa).

A propeptide spans 1 to 7 (MIRRSSG) (leader sequence). An N-methylphenylalanine modification is found at phenylalanine 8. Residues 8-28 (FTLVEMLLALAILAALSVAAV) traverse the membrane as a helical segment.

The protein belongs to the GSP J family. In terms of assembly, type II secretion is composed of four main components: the outer membrane complex, the inner membrane complex, the cytoplasmic secretion ATPase and the periplasm-spanning pseudopilus. Interacts with core component PulG. In terms of processing, cleaved by prepilin peptidase. Methylated by prepilin peptidase at the amino group of the N-terminal phenylalanine once the leader sequence is cleaved by prepilin peptidase.

Its subcellular location is the cell inner membrane. In terms of biological role, component of the type II secretion system required for the energy-dependent secretion of extracellular factors such as proteases and toxins from the periplasm. Part of the pseudopilus tip complex that is critical for the recognition and binding of secretion substrates. This is Type II secretion system protein J (pulJ) from Klebsiella pneumoniae.